Here is a 637-residue protein sequence, read N- to C-terminus: 1-deoxy-D-xylulose-5-phosphate synthase (637 aa).

Residues histidine 73 and 113-115 (SHA) contribute to the thiamine diphosphate site. A Mg(2+)-binding site is contributed by aspartate 145. Residues 146 to 147 (GA), asparagine 175, tyrosine 286, and glutamate 367 contribute to the thiamine diphosphate site. Asparagine 175 is a binding site for Mg(2+).

It belongs to the transketolase family. DXPS subfamily. As to quaternary structure, homodimer. The cofactor is Mg(2+). Thiamine diphosphate serves as cofactor.

The catalysed reaction is D-glyceraldehyde 3-phosphate + pyruvate + H(+) = 1-deoxy-D-xylulose 5-phosphate + CO2. The protein operates within metabolic intermediate biosynthesis; 1-deoxy-D-xylulose 5-phosphate biosynthesis; 1-deoxy-D-xylulose 5-phosphate from D-glyceraldehyde 3-phosphate and pyruvate: step 1/1. Its function is as follows. Catalyzes the acyloin condensation reaction between C atoms 2 and 3 of pyruvate and glyceraldehyde 3-phosphate to yield 1-deoxy-D-xylulose-5-phosphate (DXP). The chain is 1-deoxy-D-xylulose-5-phosphate synthase from Thermobifida fusca (strain YX).